A 31-amino-acid chain; its full sequence is Cytolysin Oshem 2 (31 aa).

Its subcellular location is the secreted. The protein localises to the nematocyst. The protein resides in the target cell membrane. In terms of biological role, cytolysin that shows weak hemolysis and weak myonecrosis. This is Cytolysin Oshem 2 from Olindias sambaquiensis (Hydromedusa).